Here is a 118-residue protein sequence, read N- to C-terminus: Vitelline membrane protein Vm32E (118 aa).

A signal peptide spans 1 to 17 (MKIVALTLVAFVALAGA). Residues 36-75 (GYPAPPCPTNYLFSCQPNLAPAPCAQEAQAPAYGSAGAYT) form the VM domain.

Belongs to the vitelline membrane family.

It localises to the secreted. Its function is as follows. Major early eggshell protein. This Drosophila simulans (Fruit fly) protein is Vitelline membrane protein Vm32E.